Consider the following 260-residue polypeptide: Mantle protein (260 aa).

The signal sequence occupies residues 1–16; sequence MLAVLLFAALVATAYS.

Prismatic layer of shell (at protein level). Expressed primarily in the mantle with highest level in the mantle edge and lower level in the mantle pallium.

The protein resides in the secreted. The protein is Mantle protein of Pinctada maxima (Silver-lipped pearl oyster).